A 362-amino-acid polypeptide reads, in one-letter code: Protein OCA4 (362 aa).

In terms of biological role, required for replication of Brome mosaic virus (BMV). The polypeptide is Protein OCA4 (OCA4) (Saccharomyces cerevisiae (strain ATCC 204508 / S288c) (Baker's yeast)).